A 420-amino-acid polypeptide reads, in one-letter code: Vasopressin V1a receptor (420 aa).

Positions 1-45 (MSFPRGSYDPAASNSSPRWPLSAEDANSSREAAGHQKGSDPSGDV) are disordered. Topologically, residues 1–54 (MSFPRGSYDPAASNSSPRWPLSAEDANSSREAAGHQKGSDPSGDVRNEELAKLE) are extracellular. N-linked (GlcNAc...) asparagine glycosylation occurs at asparagine 27. Positions 32 to 45 (AAGHQKGSDPSGDV) are enriched in basic and acidic residues. A helical transmembrane segment spans residues 55–75 (IAVLAVIFVVAVLGNSSVLLA). At 76-92 (LHRTPRKTSRMHLFIRH) the chain is on the cytoplasmic side. The chain crosses the membrane as a helical span at residues 93–113 (LSLADLAVAFFQVLPQLCWDI). Topologically, residues 114-125 (TYRFRGPDWLCR) are extracellular. The cysteines at positions 124 and 205 are disulfide-linked. The chain crosses the membrane as a helical span at residues 126–146 (VVKHLQVFAMFASAYMLVVMT). Topologically, residues 147-168 (ADRYIAVCHPLKTLQQPARRSR) are cytoplasmic. A helical membrane pass occupies residues 169-189 (LMIAASWVLSFLLSTPQYFIF). The Extracellular portion of the chain corresponds to 190–225 (SMIEIEVNNGTKTQDCWATFIQPWGTRAYVTWMTSG). An N-linked (GlcNAc...) asparagine glycan is attached at asparagine 198. Residues 226–246 (VFVVPVVILGTCYGFICYHIW) form a helical membrane-spanning segment. Residues 247–294 (RNVRGKTASRQSKGSGEDVAPFHKGLLVTPCVSSVKTISRAKIRTVKM) lie on the Cytoplasmic side of the membrane. Residues 295-315 (TFVIVTAYILCWAPFFIVQMW) form a helical membrane-spanning segment. At 316–331 (SVWDDNFIWTDSENPS) the chain is on the extracellular side. The chain crosses the membrane as a helical span at residues 332–352 (ITITALLASLNSCCNPWIYMF). Residues 353-420 (FSGHLLQDCV…RSIRFIPVST (68 aa)) are Cytoplasmic-facing. 2 S-palmitoyl cysteine lipidation sites follow: cysteine 367 and cysteine 368. The interval 379-411 (DSDNMSRRQTSYSNNRSPTNSTGTWKDSPKSSR) is disordered. The span at 385–403 (RRQTSYSNNRSPTNSTGTW) shows a compositional bias: polar residues. The residue at position 406 (serine 406) is a Phosphoserine.

Belongs to the G-protein coupled receptor 1 family. Vasopressin/oxytocin receptor subfamily.

Its subcellular location is the cell membrane. Receptor for arginine vasopressin. The activity of this receptor is mediated by G proteins which activate a phosphatidyl-inositol-calcium second messenger system. Involved in social memory formation. The protein is Vasopressin V1a receptor (Avpr1a) of Microtus montanus (Montane vole).